Here is a 362-residue protein sequence, read N- to C-terminus: Mortality factor 4-like protein 1 (362 aa).

Residues 12–51 (QEGERVLCFHGPLLYEAKCVKVAIKDKQVKYFIHYSGWNK) enclose the Tudor-knot domain. Residues 26–62 (YEAKCVKVAIKDKQVKYFIHYSGWNKKSAVRPRRSEK) form an interaction with KAT8 region. Residues 113 to 182 (RELQKANQEQ…RKKRARVDPT (70 aa)) form a disordered region. The interval 133-266 (PGKKTSGLQQ…VAGIKEYFNV (134 aa)) is sufficient for interaction with SIN3A. A Nuclear localization signal motif is present at residues 135–146 (KKTSGLQQKNVE). An N6-acetyllysine modification is found at lysine 143. The segment at 164–230 (STSETPQPPR…FYLPAKKNVD (67 aa)) is interaction with RB1-1. The sufficient for interaction with PHF12 stretch occupies residues 188–342 (TFMNRVEVKV…FLKYLAKNSA (155 aa)). The MRG domain occupies 191 to 362 (NRVEVKVKIP…APPEYHRKAV (172 aa)). Residues 323–344 (LALLLNYLHDFLKYLAKNSATL) are interaction with RB1-2.

Component of the NuA4 histone acetyltransferase complex which contains the catalytic subunit KAT5/TIP60 and the subunits EP400, TRRAP/PAF400, BRD8/SMAP, EPC1, DMAP1/DNMAP1, RUVBL1/TIP49, RUVBL2, ING3, actin, ACTL6A/BAF53A, MORF4L1/MRG15, MORF4L2/MRGX, MRGBP, YEATS4/GAS41, VPS72/YL1 and MEAF6. The NuA4 complex interacts with MYC and the adenovirus E1A protein. MORF4L1 may also participate in the formation of NuA4 related complexes which lack the KAT5/TIP60 catalytic subunit, but which include the SWI/SNF related protein SRCAP. Component of the mSin3A histone deacetylase complex, which includes SIN3A, HDAC2, ARID4B, MORF4L1, RBBP4/RbAp48, and RBBP7/RbAp46. May also interact with PHF12 and one or more as yet undefined members of the TLE (transducin-like enhancer of split) family of transcriptional repressors. Component of the SIN3B complex, which includes SIN3B, HDAC2 or HDAC1, PHF12 and MORF4L1. Interacts with RB1 and KAT8. Interacts with the N-terminus of MRFAP1. Found in a complex composed of MORF4L1, MRFAP1 and RB1. Interacts with the entire BRCA complex, which contains BRCA1, PALB2, BRCA2 and RAD51. Interacts with PALB2. Forms a complex with MSL1 and NUPR1.

The protein localises to the nucleus. Its function is as follows. Component of the NuA4 histone acetyltransferase (HAT) complex which is involved in transcriptional activation of select genes principally by acetylation of nucleosomal histones H4 and H2A. This modification may both alter nucleosome - DNA interactions and promote interaction of the modified histones with other proteins which positively regulate transcription. This complex may be required for the activation of transcriptional programs associated with oncogene and proto-oncogene mediated growth induction, tumor suppressor mediated growth arrest and replicative senescence, apoptosis, and DNA repair. The NuA4 complex ATPase and helicase activities seem to be, at least in part, contributed by the association of RUVBL1 and RUVBL2 with EP400. NuA4 may also play a direct role in DNA repair when directly recruited to sites of DNA damage. As part of the SIN3B complex represses transcription and counteracts the histone acetyltransferase activity of EP300 through the recognition H3K27ac marks by PHF12 and the activity of the histone deacetylase HDAC2. SIN3B complex is recruited downstream of the constitutively active genes transcriptional start sites through interaction with histones and mitigates histone acetylation and RNA polymerase II progression within transcribed regions contributing to the regulation of transcription. Required for homologous recombination repair (HRR) and resistance to mitomycin C (MMC). Involved in the localization of PALB2, BRCA2 and RAD51, but not BRCA1, to DNA-damage foci. In Homo sapiens (Human), this protein is Mortality factor 4-like protein 1.